Here is an 85-residue protein sequence, read N- to C-terminus: Toxin BmKAEP (85 aa).

Residues methionine 1–alanine 21 form the signal peptide. Residues aspartate 22–glycine 82 form the LCN-type CS-alpha/beta domain. 4 disulfides stabilise this stretch: cysteine 31/cysteine 81, cysteine 35/cysteine 56, cysteine 42/cysteine 63, and cysteine 46/cysteine 65. Glycine 82 is subject to Glycine amide.

Expressed by the venom gland.

It is found in the secreted. Functionally, shows anti-epileptic activity. Shares high homology with depressant insect toxins, but shows very weak toxicity against mammals and insects and no obvious symptoms on insect larvae. May target voltage-gated sodium channel (Nav). The polypeptide is Toxin BmKAEP (Olivierus martensii (Manchurian scorpion)).